A 217-amino-acid polypeptide reads, in one-letter code: Transcription antitermination protein NusB (217 aa).

The protein belongs to the NusB family.

In terms of biological role, involved in transcription antitermination. Required for transcription of ribosomal RNA (rRNA) genes. Binds specifically to the boxA antiterminator sequence of the ribosomal RNA (rrn) operons. The chain is Transcription antitermination protein NusB from Microcystis aeruginosa (strain NIES-843 / IAM M-2473).